A 351-amino-acid polypeptide reads, in one-letter code: N-acetyl-gamma-glutamyl-phosphate reductase (351 aa).

Cysteine 154 is a catalytic residue.

The protein belongs to the NAGSA dehydrogenase family. Type 1 subfamily.

It localises to the cytoplasm. The catalysed reaction is N-acetyl-L-glutamate 5-semialdehyde + phosphate + NADP(+) = N-acetyl-L-glutamyl 5-phosphate + NADPH + H(+). It functions in the pathway amino-acid biosynthesis; L-arginine biosynthesis; N(2)-acetyl-L-ornithine from L-glutamate: step 3/4. Functionally, catalyzes the NADPH-dependent reduction of N-acetyl-5-glutamyl phosphate to yield N-acetyl-L-glutamate 5-semialdehyde. This is N-acetyl-gamma-glutamyl-phosphate reductase from Prochlorococcus marinus (strain MIT 9312).